A 229-amino-acid polypeptide reads, in one-letter code: Orotidine 5'-phosphate decarboxylase (229 aa).

Substrate-binding positions include Asp-9, Lys-31, 58 to 67 (DLKLFDIPNT), Thr-121, Arg-179, Gln-188, Gly-208, and Arg-209. Lys-60 functions as the Proton donor in the catalytic mechanism.

This sequence belongs to the OMP decarboxylase family. Type 1 subfamily. Homodimer.

It catalyses the reaction orotidine 5'-phosphate + H(+) = UMP + CO2. It participates in pyrimidine metabolism; UMP biosynthesis via de novo pathway; UMP from orotate: step 2/2. Catalyzes the decarboxylation of orotidine 5'-monophosphate (OMP) to uridine 5'-monophosphate (UMP). The sequence is that of Orotidine 5'-phosphate decarboxylase from Lawsonia intracellularis (strain PHE/MN1-00).